We begin with the raw amino-acid sequence, 342 residues long: Polycomb group RING finger protein 2 (342 aa).

Residues Cys18–Asp57 form an RING-type zinc finger. Residues Lys51 and Lys88 each participate in a glycyl lysine isopeptide (Lys-Gly) (interchain with G-Cter in SUMO2) cross-link. The Nuclear localization signal motif lies at Lys81–Arg95. Thr237 carries the post-translational modification Phosphothreonine; by PKA. Residues Thr237–Pro342 form a disordered region. The segment covering Thr243–Ala253 has biased composition (polar residues). The segment covering Ala263 to Ser318 has biased composition (low complexity). A compositionally biased stretch (polar residues) spans Asn319–Ser328. Thr334 is subject to Phosphothreonine; by PKA.

In terms of assembly, exists as both a monomer and homodimer. Component of a PRC1-like complex. Interacts with CBX8, RING1 and RNF2. Interacts with CBX7. Interacts with PHC2. Post-translationally, phosphorylated. Homodimer formation is regulated by phosphorylation with only unphosphorylated proteins forming homodimers. In terms of tissue distribution, expressed in embryonic stem cells. Expressed in a variety of tumor cells and in neural tissues.

Its subcellular location is the nucleus. Transcriptional repressor. Binds specifically to the DNA sequence 5'-GACTNGACT-3'. Has tumor suppressor activity. May play a role in control of cell proliferation and/or neural cell development. Regulates proliferation of early T progenitor cells by maintaining expression of HES1. Also plays a role in antero-posterior specification of the axial skeleton and negative regulation of the self-renewal activity of hematopoietic stem cells. Component of a Polycomb group (PcG) multiprotein PRC1-like complex, a complex class required to maintain the transcriptionally repressive state of many genes, including Hox genes, throughout development. PcG PRC1 complex acts via chromatin remodeling and modification of histones; it mediates monoubiquitination of histone H2A 'Lys-119', rendering chromatin heritably changed in its expressibility. Within the PRC1-like complex, regulates RNF2 ubiquitin ligase activity. The sequence is that of Polycomb group RING finger protein 2 (Pcgf2) from Mus musculus (Mouse).